The chain runs to 241 residues: dTTP/UTP pyrophosphatase (241 aa).

Residue S38 is modified to Phosphoserine. The active-site Proton acceptor is D105.

Belongs to the Maf family. YhdE subfamily. The cofactor is a divalent metal cation.

It is found in the cytoplasm. The protein resides in the nucleus. The catalysed reaction is dTTP + H2O = dTMP + diphosphate + H(+). The enzyme catalyses UTP + H2O = UMP + diphosphate + H(+). In terms of biological role, nucleoside triphosphate pyrophosphatase that hydrolyzes dTTP and UTP. May have a dual role in cell division arrest and in preventing the incorporation of modified nucleotides into cellular nucleic acids. This is dTTP/UTP pyrophosphatase from Schizosaccharomyces pombe (strain 972 / ATCC 24843) (Fission yeast).